Here is a 1111-residue protein sequence, read N- to C-terminus: ATP-dependent DNA helicase mph1 (1111 aa).

Composition is skewed to acidic residues over residues 1–18 and 47–65; these read MSVS…EIDD and VFDE…DEFQ. Disordered regions lie at residues 1 to 81, 101 to 144, 210 to 240, and 259 to 280; these read MSVS…EDVE, FVTQ…HQPD, AFDS…RTNR, and IPSQ…PTHH. 2 stretches are compositionally biased toward polar residues: residues 132–143 and 215–238; these read PTTTTVDASHQP and LSLS…QFRT. Positions 306–474 constitute a Helicase ATP-binding domain; it reads IAQRGLFHNL…AVIDGLGIAK (169 aa). An ATP-binding site is contributed by 319-326; the sequence is LPTGLGKT. The DEAH box signature appears at 422–425; it reads DEAH. Positions 644 to 818 constitute a Helicase C-terminal domain; the sequence is YLKQVVLNHF…GTRFTFHDDT (175 aa). 3 disordered regions span residues 836 to 898, 998 to 1047, and 1092 to 1111; these read IDIP…RKPT, SVLS…CTPE, and AERH…DTEE. A compositionally biased stretch (basic residues) spans 852 to 864; sequence KRARPPKRPPKKF.

It belongs to the DEAD box helicase family. DEAH subfamily. FANCM sub-subfamily. In terms of assembly, interacts with the MHF histone-fold complex to form the FANCM-MHF complex.

The protein localises to the nucleus. The enzyme catalyses ATP + H2O = ADP + phosphate + H(+). Functionally, ATP-dependent DNA helicase involved in DNA damage repair by homologous recombination and in genome maintenance. Capable of unwinding D-loops. Plays a role in limiting crossover recombinants during mitotic DNA double-strand break (DSB) repair. Component of a FANCM-MHF complex which promotes gene conversion at blocked replication forks, probably by reversal of the stalled fork. The sequence is that of ATP-dependent DNA helicase mph1 from Neosartorya fischeri (strain ATCC 1020 / DSM 3700 / CBS 544.65 / FGSC A1164 / JCM 1740 / NRRL 181 / WB 181) (Aspergillus fischerianus).